Here is a 242-residue protein sequence, read N- to C-terminus: Biosynthetic peptidoglycan transglycosylase (242 aa).

The helical transmembrane segment at 19–39 (ILAALAVFWGGGIALFSVVPV) threads the bilayer.

The protein belongs to the glycosyltransferase 51 family.

The protein localises to the cell inner membrane. The catalysed reaction is [GlcNAc-(1-&gt;4)-Mur2Ac(oyl-L-Ala-gamma-D-Glu-L-Lys-D-Ala-D-Ala)](n)-di-trans,octa-cis-undecaprenyl diphosphate + beta-D-GlcNAc-(1-&gt;4)-Mur2Ac(oyl-L-Ala-gamma-D-Glu-L-Lys-D-Ala-D-Ala)-di-trans,octa-cis-undecaprenyl diphosphate = [GlcNAc-(1-&gt;4)-Mur2Ac(oyl-L-Ala-gamma-D-Glu-L-Lys-D-Ala-D-Ala)](n+1)-di-trans,octa-cis-undecaprenyl diphosphate + di-trans,octa-cis-undecaprenyl diphosphate + H(+). The protein operates within cell wall biogenesis; peptidoglycan biosynthesis. Peptidoglycan polymerase that catalyzes glycan chain elongation from lipid-linked precursors. The polypeptide is Biosynthetic peptidoglycan transglycosylase (Salmonella typhi).